The chain runs to 317 residues: Acetyl-coenzyme A carboxylase carboxyl transferase subunit beta (317 aa).

Positions 1–28 are disordered; it reads MANNMTDTMTKPDINNDSTSLQQNGNKA. Residues 55 to 317 form the CoA carboxyltransferase N-terminal domain; that stretch reads PSTKCSSCHS…LCSVPNVDVQ (263 aa). Residues cysteine 59, cysteine 62, cysteine 78, and cysteine 81 each coordinate Zn(2+). A C4-type zinc finger spans residues 59–81; it reads CSSCHSIITNTALIFNCYVCPHC.

It belongs to the AccD/PCCB family. Acetyl-CoA carboxylase is a heterohexamer composed of biotin carboxyl carrier protein (AccB), biotin carboxylase (AccC) and two subunits each of ACCase subunit alpha (AccA) and ACCase subunit beta (AccD). It depends on Zn(2+) as a cofactor.

It is found in the cytoplasm. The catalysed reaction is N(6)-carboxybiotinyl-L-lysyl-[protein] + acetyl-CoA = N(6)-biotinyl-L-lysyl-[protein] + malonyl-CoA. Its pathway is lipid metabolism; malonyl-CoA biosynthesis; malonyl-CoA from acetyl-CoA: step 1/1. Its function is as follows. Component of the acetyl coenzyme A carboxylase (ACC) complex. Biotin carboxylase (BC) catalyzes the carboxylation of biotin on its carrier protein (BCCP) and then the CO(2) group is transferred by the transcarboxylase to acetyl-CoA to form malonyl-CoA. This is Acetyl-coenzyme A carboxylase carboxyl transferase subunit beta from Psychrobacter cryohalolentis (strain ATCC BAA-1226 / DSM 17306 / VKM B-2378 / K5).